Reading from the N-terminus, the 1054-residue chain is MAAAPRGIWEQRRLGCGLGPLARLLILAQALRLLPAARAGLCPAPCACRLPLLDCSRRKLPAPSWRALSGPLPSDISSLDLSHNRLSNWNNTLESQTLQEVKMNYNELTEIPYFGEPTPNITLLSLVHNLIPEINAEAFELYSALESLDLSSNIISEIKTSSFPRMSLKYLNLSNNRISTLEAGCFDNLSDSLLVVKLNRNRISMIPPKVFKLPHLQFLELKRNRIKIVEGLTFQGLDSLRSLKMQRNGISKLKDGAFFGLNNMEELELEHNNLTGVNKGWLYGLRMLQQLYMSQNAIEKISPDAWEFCQRLSELDLSYNQLTRLDESAFVGLSLLERLNLGDNRVTHIADGVFRFLSNLQTLDLRNNDISWAIEDASEAFSGLKSLTKLILQGNRIKSVTQKAFIGLESLEYLDLNNNAIMSIQENAFSQTHLKGLVLNTSSLLCDCHLKWLLQWLVDNNFHHSVNVSCAHPEWLAGQSILNVDLKDFVCDDFLKPQIRTHPESTIALRGVNVTLTCTAVSSSDSPMSTIWRKDSEILYDVDIENFVRYRQQDGEALEYTSVLRLFSVNFTDEGKYQCIVTNHFGSNYSQKAKLTVNEMPSFLKTPMDLTIRTGAMARLECAAEGHPTPQISWQKDGGTDFPAARERRMHVMPEDDVFFIANVKIEDMGIYSCMAQNIAGGLSANASLTVLETPSFIRPLEDKTVTRGETAVLQCIAGGSPAPRLNWTKDDGPLLVTERHFFAAANQLLIIVDAGLEDAGKYTCLMSNTLGTERGHIYLNVISSPNCDSSQSSIGHEDDGWTTVGIVIIVVVCCVVGTSLIWVIVIYHMRRKNEDYSITNTEELNLPADIPSYLSSQGTLSEPQEGYSNSEAGSHQQLMPPANGYTHRGTDGGAGTRVICSDCYDNANIYSRTREYCPYTYIAEEDVLDQALSSLMVQMPKETFLSHPPQDAANLESLIPSAEREPAAFPTNHERMTENLPFSQRSSEIFQRPLWNMNRELGLLPFSQQPVLESPELTERDPNCSSPVTCRRLHDHAFDFSRTRIIQDGTEGT.

A signal peptide spans 1–39 (MAAAPRGIWEQRRLGCGLGPLARLLILAQALRLLPAARA). The 35-residue stretch at 40–74 (GLCPAPCACRLPLLDCSRRKLPAPSWRALSGPLPS) folds into the LRRNT domain. LRR repeat units lie at residues 75-96 (DISS…LESQ), 97-118 (TLQE…GEPT), 120-141 (NITL…AFEL), 144-165 (ALES…SFPR), 167-188 (SLKY…CFDN), 192-213 (SLLV…VFKL), 215-236 (HLQF…TFQG), 239-260 (SLRS…AFFG), 263-284 (NMEE…WLYG), 287-308 (MLQQ…AWEF), 311-332 (RLSE…AFVG), 335-356 (LLER…VFRF), 359-381 (NLQT…SEAF), 386-407 (SLTK…AFIG), and 410-431 (SLEY…AFSQ). Asn-90 is a glycosylation site (N-linked (GlcNAc...) asparagine). Asn-120 carries N-linked (GlcNAc...) asparagine glycosylation. N-linked (GlcNAc...) asparagine glycosylation is found at Asn-172 and Asn-188. Asn-273 carries an N-linked (GlcNAc...) asparagine glycan. 5 N-linked (GlcNAc...) asparagine glycosylation sites follow: Asn-440, Asn-467, Asn-513, Asn-570, and Asn-588. Positions 442 to 493 (SSLLCDCHLKWLLQWLVDNNFHHSVNVSCAHPEWLAGQSILNVDLKDFVCDD) constitute an LRRCT domain. 3 consecutive Ig-like C2-type domains span residues 497–596 (PQIR…AKLT), 601–690 (PSFL…ASLT), and 695–784 (PSFI…NVIS). An intrachain disulfide couples Cys-518 to Cys-579. A disulfide bridge connects residues Cys-622 and Cys-674. Residues Asn-686 and Asn-727 are each glycosylated (N-linked (GlcNAc...) asparagine). A disulfide bond links Cys-716 and Cys-765. A helical membrane pass occupies residues 807–827 (IVIIVVVCCVVGTSLIWVIVI). Position 905 is a phosphotyrosine (Tyr-905). An N-linked (GlcNAc...) asparagine glycan is attached at Asn-1024.

The protein resides in the cell membrane. Its subcellular location is the cytoplasm. This Mus musculus (Mouse) protein is Leucine-rich repeats and immunoglobulin-like domains protein 2 (Lrig2).